The sequence spans 1107 residues: Unconventional myosin-Ie (1107 aa).

The Myosin motor domain maps to 19–692 (SGVDDMVLLS…SLFLLEEMRE (674 aa)). 112 to 119 (GESGAGKT) is an ATP binding site. Residues 581–591 (PHYIRCIKPNE) are actin-binding. Positions 695-724 (YDGYARVIQKTWRKFVARKKYVQMREDASD) constitute an IQ domain. In terms of domain architecture, TH1 spans 730–922 (KERRRNSINR…NKVLQVSIGP (193 aa)). The interval 920 to 1052 (IGPGLPKNAR…KPQPKPKPQV (133 aa)) is disordered. 3 stretches are compositionally biased toward polar residues: residues 933 to 949 (RNTVSSRGYSGGTNNNY), 977 to 989 (SGNQRSNQKSLYT), and 998 to 1012 (RQQSTGSDRLSQTPE). The residue at position 1001 (Ser-1001) is a Phosphoserine. Positions 1034-1051 (RPPPAGGRPKPQPKPKPQ) are enriched in pro residues. Residues 1050–1107 (PQVPQCKALYAYDAQDTDELSFNANDVIDIIKEDPSGWWTGRLRGKQGLFPNNYVTKI) enclose the SH3 domain.

The protein belongs to the TRAFAC class myosin-kinesin ATPase superfamily. Myosin family. In terms of assembly, interacts with CALM and F-actin. Interacts (via SH3 domain) with SYNJ1, DNM1 and DNM2. Interacts with ARL14EP. Interacts with CARMIL1. Detected in brain stem, brain cortex, cerebellum, stomach, colon, heart, lung, liver, spleen and kidney. Detected in utricle, cochlea, outer hair cell bundle cuticular plate and vestibular epithelia (at protein level). Detected in cochlea and vestibular tissues. Detected in kidney, lung, spleen and intestine.

Its subcellular location is the cytoplasm. The protein localises to the cytoskeleton. It is found in the cytoplasmic vesicle. It localises to the clathrin-coated vesicle. The protein resides in the cell junction. Functionally, myosins are actin-based motor molecules with ATPase activity. Unconventional myosins serve in intracellular movements. Their highly divergent tails bind to membranous compartments, which are then moved relative to actin filaments. Binds to membranes containing anionic phospholipids via its tail domain. Involved in clathrin-mediated endocytosis and intracellular movement of clathrin-coated vesicles. Required for normal morphology of the glomerular basement membrane, normal development of foot processes by kidney podocytes and normal kidney function. In dendritic cells, may control the movement of class II-containing cytoplasmic vesicles along the actin cytoskeleton by connecting them with the actin network via ARL14EP and ARL14. The chain is Unconventional myosin-Ie (Myo1e) from Rattus norvegicus (Rat).